A 356-amino-acid chain; its full sequence is Phenylalanine dehydrogenase (356 aa).

Arg43 is an NAD(+) binding site. Lys67 contributes to the L-phenylalanine binding site. Lys79 functions as the Proton donor/acceptor in the catalytic mechanism. 118–119 (PD) contacts L-phenylalanine. NAD(+)-binding positions include Asp119, Ser150, Thr154, 183-189 (GLGAVGG), 206-207 (DT), Arg211, 240-241 (AM), and 261-263 (AAN). Position 263 (Asn263) interacts with L-phenylalanine.

It belongs to the Glu/Leu/Phe/Val dehydrogenases family. As to quaternary structure, homotetramer, dimer of dimers.

It catalyses the reaction L-phenylalanine + NAD(+) + H2O = 3-phenylpyruvate + NH4(+) + NADH + H(+). It participates in amino-acid biosynthesis; L-phenylalanine biosynthesis; L-phenylalanine from phenylpyruvate (PDH route): step 1/1. With respect to regulation, subject to competitive inhibition by 3-phenylpropionate for the conversion of L-phenylalanine to phenylpyruvate. Subject to competitive inhibition by D-phenylalanine for the conversion of phenylpyruvate to L-phenylalanine. Its function is as follows. Catalyzes the reversible NAD(+)-dependent oxidative deamination of L-phenylalanine to phenylpyruvate. This Rhodococcus sp protein is Phenylalanine dehydrogenase.